Here is a 210-residue protein sequence, read N- to C-terminus: 3-hexulose-6-phosphate synthase (210 aa).

It belongs to the HPS/KGPDC family. HPS subfamily.

The enzyme catalyses D-ribulose 5-phosphate + formaldehyde = D-arabino-hex-3-ulose 6-phosphate. It participates in one-carbon metabolism; formaldehyde assimilation via RuMP pathway; D-fructose 6-phosphate from D-ribulose 5-phosphate and formaldehyde: step 1/2. Its function is as follows. Catalyzes the condensation of ribulose 5-phosphate with formaldehyde to form 3-hexulose 6-phosphate. This Staphylococcus epidermidis (strain ATCC 12228 / FDA PCI 1200) protein is 3-hexulose-6-phosphate synthase.